The primary structure comprises 513 residues: Noroxomaritidine synthase 2 (513 aa).

The helical transmembrane segment at 14 to 34 (HYPEILIAIACFLIFSLLLSA) threads the bilayer. Cys458 contributes to the heme binding site.

Belongs to the cytochrome P450 family. The cofactor is heme.

Its subcellular location is the membrane. It carries out the reaction 4'-O-methylnorbelladine + reduced [NADPH--hemoprotein reductase] + O2 = (10bR,4aS)-noroxomaritidine + oxidized [NADPH--hemoprotein reductase] + 2 H2O + H(+). The enzyme catalyses 4'-O-methylnorbelladine + reduced [NADPH--hemoprotein reductase] + O2 = (10bS,4aR)-noroxomaritidine + oxidized [NADPH--hemoprotein reductase] + 2 H2O + H(+). The protein operates within alkaloid biosynthesis. Cytochrome P450 that catalyzes an intramolecular para-para' C-C phenol coupling of 4'-O-methylnorbelladine in alkaloids biosynthesis, including haemanthamine- and crinamine-type alkaloids, promising anticancer agents. Catalyzes the formation of (10bR,4aS)-noroxomaritidine and (10bS,4aR)-noroxomaritidine from 4'-O-methylnorbelladine. This Narcissus aff. pseudonarcissus MK-2014 (Daffodil) protein is Noroxomaritidine synthase 2.